The sequence spans 154 residues: Myoglobin (154 aa).

Residues 2–148 form the Globin domain; the sequence is GLSEAEWQLV…FRKDIAAKYK (147 aa). Ser-4 is subject to Phosphoserine. His-65 lines the nitrite pocket. O2 is bound at residue His-65. A Phosphothreonine modification is found at Thr-68. Residue His-94 coordinates heme b.

It belongs to the globin family. Monomeric.

It localises to the cytoplasm. The protein resides in the sarcoplasm. The enzyme catalyses Fe(III)-heme b-[protein] + nitric oxide + H2O = Fe(II)-heme b-[protein] + nitrite + 2 H(+). It carries out the reaction H2O2 + AH2 = A + 2 H2O. Its function is as follows. Monomeric heme protein which primary function is to store oxygen and facilitate its diffusion within muscle tissues. Reversibly binds oxygen through a pentacoordinated heme iron and enables its timely and efficient release as needed during periods of heightened demand. Depending on the oxidative conditions of tissues and cells, and in addition to its ability to bind oxygen, it also has a nitrite reductase activity whereby it regulates the production of bioactive nitric oxide. Under stress conditions, like hypoxia and anoxia, it also protects cells against reactive oxygen species thanks to its pseudoperoxidase activity. The chain is Myoglobin (MB) from Mesoplodon carlhubbsi (Hubb's beaked whale).